A 56-amino-acid polypeptide reads, in one-letter code: Large ribosomal subunit protein bL32 (56 aa).

Basic residues predominate over residues 1–16 (MAVQKSKKSRSMRGMR). The disordered stretch occupies residues 1-21 (MAVQKSKKSRSMRGMRRSHDA).

This sequence belongs to the bacterial ribosomal protein bL32 family.

This is Large ribosomal subunit protein bL32 from Vibrio atlanticus (strain LGP32) (Vibrio splendidus (strain Mel32)).